The primary structure comprises 229 residues: tRNA pseudouridine synthase B (229 aa).

Residue D52 is the Nucleophile of the active site.

This sequence belongs to the pseudouridine synthase TruB family. Type 1 subfamily.

It catalyses the reaction uridine(55) in tRNA = pseudouridine(55) in tRNA. Responsible for synthesis of pseudouridine from uracil-55 in the psi GC loop of transfer RNAs. This chain is tRNA pseudouridine synthase B, found in Flavobacterium johnsoniae (strain ATCC 17061 / DSM 2064 / JCM 8514 / BCRC 14874 / CCUG 350202 / NBRC 14942 / NCIMB 11054 / UW101) (Cytophaga johnsonae).